Reading from the N-terminus, the 551-residue chain is Chaperonin GroEL 4 (551 aa).

Residues 30–33 (TLGP), Lys51, 87–91 (DGTTT), Gly415, and Asp495 contribute to the ATP site.

Belongs to the chaperonin (HSP60) family. Forms a cylinder of 14 subunits composed of two heptameric rings stacked back-to-back. Interacts with the co-chaperonin GroES.

Its subcellular location is the cytoplasm. It carries out the reaction ATP + H2O + a folded polypeptide = ADP + phosphate + an unfolded polypeptide.. Its function is as follows. Together with its co-chaperonin GroES, plays an essential role in assisting protein folding. The GroEL-GroES system forms a nano-cage that allows encapsulation of the non-native substrate proteins and provides a physical environment optimized to promote and accelerate protein folding. The sequence is that of Chaperonin GroEL 4 from Mesorhizobium japonicum (strain LMG 29417 / CECT 9101 / MAFF 303099) (Mesorhizobium loti (strain MAFF 303099)).